Reading from the N-terminus, the 453-residue chain is Exodeoxyribonuclease 7 large subunit (453 aa).

Belongs to the XseA family. As to quaternary structure, heterooligomer composed of large and small subunits.

The protein localises to the cytoplasm. It carries out the reaction Exonucleolytic cleavage in either 5'- to 3'- or 3'- to 5'-direction to yield nucleoside 5'-phosphates.. In terms of biological role, bidirectionally degrades single-stranded DNA into large acid-insoluble oligonucleotides, which are then degraded further into small acid-soluble oligonucleotides. This Geobacter metallireducens (strain ATCC 53774 / DSM 7210 / GS-15) protein is Exodeoxyribonuclease 7 large subunit.